The primary structure comprises 255 residues: Na(+)-translocating NADH-quinone reductase subunit C (255 aa).

A helical transmembrane segment spans residues 12-32; the sequence is LFVVIALSLVCSIIVSTAAVG. T223 bears the FMN phosphoryl threonine mark.

This sequence belongs to the NqrC family. Composed of six subunits; NqrA, NqrB, NqrC, NqrD, NqrE and NqrF. FMN serves as cofactor.

The protein localises to the cell inner membrane. The catalysed reaction is a ubiquinone + n Na(+)(in) + NADH + H(+) = a ubiquinol + n Na(+)(out) + NAD(+). Functionally, NQR complex catalyzes the reduction of ubiquinone-1 to ubiquinol by two successive reactions, coupled with the transport of Na(+) ions from the cytoplasm to the periplasm. NqrA to NqrE are probably involved in the second step, the conversion of ubisemiquinone to ubiquinol. The chain is Na(+)-translocating NADH-quinone reductase subunit C from Vibrio anguillarum (Listonella anguillarum).